A 127-amino-acid polypeptide reads, in one-letter code: UPF0325 protein VC_2264 (127 aa).

This sequence belongs to the UPF0325 family.

This chain is UPF0325 protein VC_2264, found in Vibrio cholerae serotype O1 (strain ATCC 39315 / El Tor Inaba N16961).